Consider the following 382-residue polypeptide: Low-specificity L-threonine aldolase (382 aa).

Lysine 214 carries the N6-(pyridoxal phosphate)lysine modification.

Belongs to the threonine aldolase family. Homotetramer. Requires pyridoxal 5'-phosphate as cofactor.

It catalyses the reaction L-threonine = acetaldehyde + glycine. It carries out the reaction L-allo-threonine = acetaldehyde + glycine. The protein operates within amino-acid degradation; L-threonine degradation via aldolase pathway; acetaldehyde and glycine from L-threonine: step 1/1. The polypeptide is Low-specificity L-threonine aldolase (GLY1) (Eremothecium gossypii (strain ATCC 10895 / CBS 109.51 / FGSC 9923 / NRRL Y-1056) (Yeast)).